The chain runs to 346 residues: Biotin synthase (346 aa).

One can recognise a Radical SAM core domain in the interval 38–256 (RQVQVSTLLS…IAVARIMMPT (219 aa)). Residues cysteine 53, cysteine 57, and cysteine 60 each contribute to the [4Fe-4S] cluster site. Cysteine 97, cysteine 128, cysteine 188, and arginine 260 together coordinate [2Fe-2S] cluster.

It belongs to the radical SAM superfamily. Biotin synthase family. Homodimer. The cofactor is [4Fe-4S] cluster. [2Fe-2S] cluster is required as a cofactor.

It carries out the reaction (4R,5S)-dethiobiotin + (sulfur carrier)-SH + 2 reduced [2Fe-2S]-[ferredoxin] + 2 S-adenosyl-L-methionine = (sulfur carrier)-H + biotin + 2 5'-deoxyadenosine + 2 L-methionine + 2 oxidized [2Fe-2S]-[ferredoxin]. It functions in the pathway cofactor biosynthesis; biotin biosynthesis; biotin from 7,8-diaminononanoate: step 2/2. Catalyzes the conversion of dethiobiotin (DTB) to biotin by the insertion of a sulfur atom into dethiobiotin via a radical-based mechanism. This is Biotin synthase from Escherichia coli (strain SE11).